The chain runs to 287 residues: Glycine--tRNA ligase alpha subunit (287 aa).

This sequence belongs to the class-II aminoacyl-tRNA synthetase family. As to quaternary structure, tetramer of two alpha and two beta subunits.

It is found in the cytoplasm. It carries out the reaction tRNA(Gly) + glycine + ATP = glycyl-tRNA(Gly) + AMP + diphosphate. This is Glycine--tRNA ligase alpha subunit from Campylobacter curvus (strain 525.92).